The primary structure comprises 313 residues: Olfactory receptor 6E1 (313 aa).

The N-linked (GlcNAc...) asparagine glycan is linked to Asn-3. 7 consecutive transmembrane segments (helical) span residues 25-45 (IFLG…LIIF), 64-84 (FAML…TNII), 96-116 (FLQA…LAVM), 142-162 (LVFC…SIVF), 192-212 (LVEF…LAVT), 238-258 (TCSS…FMYV), and 271-291 (KVVA…IYTL). Residues Cys-95 and Cys-177 are joined by a disulfide bond.

This sequence belongs to the G-protein coupled receptor 1 family.

The protein resides in the cell membrane. Odorant receptor. Activated by (-)-citronellal and to a lesser extent by (+)-citronellal. Not activated by carvone or limonene. This Mus musculus (Mouse) protein is Olfactory receptor 6E1.